Consider the following 154-residue polypeptide: 6,7-dimethyl-8-ribityllumazine synthase (154 aa).

Residues W22, 56–58, and 80–82 each bind 5-amino-6-(D-ribitylamino)uracil; these read SHE and AVI. 85–86 provides a ligand contact to (2S)-2-hydroxy-3-oxobutyl phosphate; that stretch reads DT. H88 (proton donor) is an active-site residue. Residue F113 participates in 5-amino-6-(D-ribitylamino)uracil binding. R127 lines the (2S)-2-hydroxy-3-oxobutyl phosphate pocket.

It belongs to the DMRL synthase family.

It catalyses the reaction (2S)-2-hydroxy-3-oxobutyl phosphate + 5-amino-6-(D-ribitylamino)uracil = 6,7-dimethyl-8-(1-D-ribityl)lumazine + phosphate + 2 H2O + H(+). The protein operates within cofactor biosynthesis; riboflavin biosynthesis; riboflavin from 2-hydroxy-3-oxobutyl phosphate and 5-amino-6-(D-ribitylamino)uracil: step 1/2. Its function is as follows. Catalyzes the formation of 6,7-dimethyl-8-ribityllumazine by condensation of 5-amino-6-(D-ribitylamino)uracil with 3,4-dihydroxy-2-butanone 4-phosphate. This is the penultimate step in the biosynthesis of riboflavin. This is 6,7-dimethyl-8-ribityllumazine synthase from Deinococcus geothermalis (strain DSM 11300 / CIP 105573 / AG-3a).